The sequence spans 386 residues: Cytoplasmic 60S subunit biogenesis factor ZNF622 (386 aa).

Alanine 2 carries the N-acetylalanine modification. 2 U1-type zinc fingers span residues 4 to 28 (YTCI…TDWH) and 67 to 91 (TYCT…SRRH). A disordered region spans residues 135–237 (AIKAQPSTSP…AEDAEAEESP (103 aa)). A compositionally biased stretch (basic and acidic residues) spans 165–176 (GTPERDPTEKPP). A compositionally biased stretch (acidic residues) spans 194–235 (EESEEEGEEDDEDWEDIDSDDGLECENPGVEEEDAEDAEAEE). Serine 269 is modified (phosphoserine).

This sequence belongs to the REI1 family. As to quaternary structure, homo- and heterodimer. Associates with pre-60S ribosomal particles. Interacts with MELK and MYBL2. Interacts with DNAJC21. In terms of processing, phosphorylated by MELK. The phosphorylation may redirect the protein to the nucleus. Post-translationally, ubiquitinated by HECTD1, leading to its degradation.

The protein resides in the cytoplasm. It is found in the nucleus. Functionally, pre-60S-associated cytoplasmic factor involved in the cytoplasmic maturation of the 60S subunit. This chain is Cytoplasmic 60S subunit biogenesis factor ZNF622 (Znf622), found in Rattus norvegicus (Rat).